A 237-amino-acid chain; its full sequence is Proteasome subunit beta type-1 (237 aa).

The protein belongs to the peptidase T1B family. In terms of assembly, the 26S proteasome consists of a 20S proteasome core and two 19S regulatory subunits. The 20S proteasome core is a barrel-shaped complex made of 28 subunits that are arranged in four stacked rings. The two outer rings are each formed by seven alpha subunits, and the two inner rings are formed by seven beta subunits. The proteolytic activity is exerted by three beta-subunits psmb5, psmb6 and psmb7.

It is found in the cytoplasm. It localises to the nucleus. Its function is as follows. Non-catalytic component of the 20S core proteasome complex involved in the proteolytic degradation of most intracellular proteins. This complex plays numerous essential roles within the cell by associating with different regulatory particles. Associated with two 19S regulatory particles, forms the 26S proteasome and thus participates in the ATP-dependent degradation of ubiquitinated proteins. The 26S proteasome plays a key role in the maintenance of protein homeostasis by removing misfolded or damaged proteins that could impair cellular functions, and by removing proteins whose functions are no longer required. Associated with the PA200 or PA28, the 20S proteasome mediates ubiquitin-independent protein degradation. This chain is Proteasome subunit beta type-1, found in Danio rerio (Zebrafish).